We begin with the raw amino-acid sequence, 358 residues long: MKFGPETIIHGDCIEQMNALPEKSVDLIFADPPYNLQLGGDLLRPDNSKVDAVDDHWDQFESFAAYDKFTREWLKAARRVLKDDGAIWVIGSYHNIFRVGVAVQDLGFWILNDIVWRKSNPMPNFKGTRFANAHETLIWASKSQNAKRYTFNYDALKMANDEVQMRSDWTIPLCTGEERIKGADGQKAHPTQKPEALLYRVILSTTKPGDVILDPFFGVGTTGAAAKRLGRKFIGIEREAEYLEHAKARIAKVVPIAPEDLDVMGSKRAEPRVPFGTIVEAGLLSPGDTLYCSKGTHVAKVRPDGSITVGDLSGSIHKIGALVQSAPACNGWTYWHFKTDAGLAPIDVLRAQVRAGMN.

Positions 1-260 are methyltransferase; the sequence is MKFGPETIIH…AKVVPIAPED (260 aa). DNA-binding regions (target strand DNA) lie at residues 31 to 34 and 39 to 45; these read DPPY and GGDLLRP. 2 consecutive DNA-binding regions (non-target strand DNA) follow at residues 93 to 94 and 109 to 110; these read YH and WI. Position 94 (H94) interacts with dsDNA. A DNA-binding region (target strand DNA) is located at residues 122–132; it reads MPNFKGTRFAN. Residues 153-157 constitute a DNA-binding region (non-target strand DNA); sequence YDALK. DsDNA contacts are provided by Q164 and R179. The segment at residues 187–193 is a DNA-binding region (target strand DNA); the sequence is KAHPTQK. An RAMA domain is found at 259-355; the sequence is EDLDVMGSKR…IDVLRAQVRA (97 aa). The segment at 261–270 is linker; that stretch reads LDVMGSKRAE. 2 residues coordinate dsDNA: K267 and R272. The tract at residues 272–358 is non-specific DNA-binding; sequence RVPFGTIVEA…LRAQVRAGMN (87 aa). 2 consecutive DNA-binding regions (non-target strand DNA) follow at residues 315 to 317 and 330 to 332; these read SIH and NGW. R350 contacts dsDNA.

It belongs to the N(4)/N(6)-methyltransferase family. As to quaternary structure, homodimer. In terms of processing, rapidly degraded by Lon protease prior to cell division.

It carries out the reaction a 2'-deoxyadenosine in DNA + S-adenosyl-L-methionine = an N(6)-methyl-2'-deoxyadenosine in DNA + S-adenosyl-L-homocysteine + H(+). Functionally, a beta subtype methylase that recognizes the double-stranded sequence 5'-GANTC-3' and methylates non-modifed A-2 on the hemimethylated, post-replicative DNA. Opens a bubble in the DNA at the recognition site, allowing precise recognition of the sequence and ensuring enzyme specificity. Functions only in the predivisional cell. Responsible for 5'-GANTC-3' methylation in the cell; methylation of hemimethylated sites generated after replication fork passage occurs late in the predivisional cell, near completion of chromosome replication but prior to cell division. Contributes to the accurate cell-cycle control of DNA replication and cellular morphology. The polypeptide is DNA methyltransferase CcrM (ccrMIM) (Caulobacter vibrioides (strain ATCC 19089 / CIP 103742 / CB 15) (Caulobacter crescentus)).